The following is a 699-amino-acid chain: UvrABC system protein C (699 aa).

Low complexity predominate over residues 1 to 51 (MIQHPTDTPEVAADAAAEPERAAGAAGATPQPSQDAVEPAADVDAATASLA). Residues 1–59 (MIQHPTDTPEVAADAAAEPERAAGAAGATPQPSQDAVEPAADVDAATASLAAEDDDEPV) form a disordered region. Residues 92–170 (TSPGVYRMLN…IKQLRPRFNV (79 aa)) enclose the GIY-YIG domain. Positions 280-315 (RLVKQELAGEMEKASAELEFETAALYRDRLAALSAI) constitute a UVR domain.

This sequence belongs to the UvrC family. Interacts with UvrB in an incision complex.

It is found in the cytoplasm. Functionally, the UvrABC repair system catalyzes the recognition and processing of DNA lesions. UvrC both incises the 5' and 3' sides of the lesion. The N-terminal half is responsible for the 3' incision and the C-terminal half is responsible for the 5' incision. The protein is UvrABC system protein C of Rhodopseudomonas palustris (strain BisB18).